The sequence spans 348 residues: Holliday junction branch migration complex subunit RuvB (348 aa).

The segment covering 1 to 10 (MAIVSSSSGR) has biased composition (low complexity). Positions 1-37 (MAIVSSSSGRKPPRRPEALMDPQQAPEEVVSRPEDKL) are disordered. The large ATPase domain (RuvB-L) stretch occupies residues 13-198 (PRRPEALMDP…FGLIQRLEFY (186 aa)). Positions 37, 38, 79, 82, 83, 84, 188, 198, and 235 each coordinate ATP. Mg(2+) is bound at residue threonine 83. The segment at 199 to 271 (GQGDLEAIVE…LVGEALSLHR (73 aa)) is small ATPAse domain (RuvB-S). A head domain (RuvB-H) region spans residues 274 to 348 (HRGLDASDRR…AARSHLAEAA (75 aa)). The DNA site is built by arginine 329 and arginine 334.

This sequence belongs to the RuvB family. As to quaternary structure, homohexamer. Forms an RuvA(8)-RuvB(12)-Holliday junction (HJ) complex. HJ DNA is sandwiched between 2 RuvA tetramers; dsDNA enters through RuvA and exits via RuvB. An RuvB hexamer assembles on each DNA strand where it exits the tetramer. Each RuvB hexamer is contacted by two RuvA subunits (via domain III) on 2 adjacent RuvB subunits; this complex drives branch migration. In the full resolvosome a probable DNA-RuvA(4)-RuvB(12)-RuvC(2) complex forms which resolves the HJ.

The protein localises to the cytoplasm. The catalysed reaction is ATP + H2O = ADP + phosphate + H(+). In terms of biological role, the RuvA-RuvB-RuvC complex processes Holliday junction (HJ) DNA during genetic recombination and DNA repair, while the RuvA-RuvB complex plays an important role in the rescue of blocked DNA replication forks via replication fork reversal (RFR). RuvA specifically binds to HJ cruciform DNA, conferring on it an open structure. The RuvB hexamer acts as an ATP-dependent pump, pulling dsDNA into and through the RuvAB complex. RuvB forms 2 homohexamers on either side of HJ DNA bound by 1 or 2 RuvA tetramers; 4 subunits per hexamer contact DNA at a time. Coordinated motions by a converter formed by DNA-disengaged RuvB subunits stimulates ATP hydrolysis and nucleotide exchange. Immobilization of the converter enables RuvB to convert the ATP-contained energy into a lever motion, pulling 2 nucleotides of DNA out of the RuvA tetramer per ATP hydrolyzed, thus driving DNA branch migration. The RuvB motors rotate together with the DNA substrate, which together with the progressing nucleotide cycle form the mechanistic basis for DNA recombination by continuous HJ branch migration. Branch migration allows RuvC to scan DNA until it finds its consensus sequence, where it cleaves and resolves cruciform DNA. The protein is Holliday junction branch migration complex subunit RuvB of Synechococcus sp. (strain CC9605).